The primary structure comprises 179 residues: MSSRILTSHFSGLEEFLQQHAALLAKSTDGTVAVFANNAPAFYALTPARLAQLLELEARLARPGSDIALAPQFFEEPAAAPVAVPMGKFAMYADWQPDADFQRLAALWGIALSQPVTPEELAAFVAYWQAEGKVFHHVQWQQKLARSVQISRASNGGQPKRDVNSVSEPDSHIPRGFRG.

A disordered region spans residues 151–179; the sequence is SRASNGGQPKRDVNSVSEPDSHIPRGFRG. Residues 159–173 are compositionally biased toward basic and acidic residues; the sequence is PKRDVNSVSEPDSHI.

It belongs to the DnaT family. Homooligomerizes. Interacts with PriB. Component of the replication restart primosome. Primosome assembly occurs via a 'hand-off' mechanism. PriA binds to replication forks, subsequently PriB then DnaT bind; DnaT then displaces ssDNA to generate the helicase loading substrate.

Functionally, involved in the restart of stalled replication forks, which reloads the replicative helicase on sites other than the origin of replication. Can function in multiple replication restart pathways. Displaces ssDNA from a PriB-ssDNA complex. Probably forms a spiral filament on ssDNA. This chain is Replication restart protein DnaT, found in Klebsiella pneumoniae (strain 342).